Reading from the N-terminus, the 151-residue chain is Large ribosomal subunit protein bL9 (151 aa).

It belongs to the bacterial ribosomal protein bL9 family.

In terms of biological role, binds to the 23S rRNA. In Bordetella petrii (strain ATCC BAA-461 / DSM 12804 / CCUG 43448), this protein is Large ribosomal subunit protein bL9.